Reading from the N-terminus, the 274-residue chain is Methionine-binding lipoprotein MetQ (274 aa).

An N-terminal signal peptide occupies residues 1 to 19 (MKKLFLGALLLVFAGVMAA). Cys-20 carries N-palmitoyl cysteine lipidation. A lipid anchor (S-diacylglycerol cysteine) is attached at Cys-20.

The protein belongs to the NlpA lipoprotein family. In terms of assembly, the complex is composed of two ATP-binding proteins (MetN), two transmembrane proteins (MetP) and a solute-binding protein (metQ).

It is found in the cell membrane. Its function is as follows. Part of the ABC transporter complex MetNPQ involved in methionine import. Binds the methionine and transfers it to the membrane-bound permease. It has also been shown to be involved in methionine sulfoxide transport. The protein is Methionine-binding lipoprotein MetQ (metQ) of Bacillus subtilis (strain 168).